Consider the following 76-residue polypeptide: Dermaseptin-H1 (76 aa).

An N-terminal signal peptide occupies residues 1-22 (MDILKKSLFIVLFLGLVSLSIC). The propeptide occupies 23-45 (EEEKRENEDEEEQEDDEQSEEKR). A disordered region spans residues 25-44 (EKRENEDEEEQEDDEQSEEK). Acidic residues predominate over residues 30–41 (EDEEEQEDDEQS). Glutamine amide is present on Gln-73. Residues 75 to 76 (EQ) constitute a propeptide that is removed on maturation.

Expressed by the skin glands.

It is found in the secreted. Functionally, has antimicrobial activity. In Pithecopus hypochondrialis (Orange-legged leaf frog), this protein is Dermaseptin-H1.